A 112-amino-acid chain; its full sequence is Colipase (112 aa).

Positions 1–17 are cleaved as a signal peptide; that stretch reads MEKILVLLLVALAVVYA. The propeptide at 18 to 22 is enterostatin, activation peptide; sequence VPDPR. Intrachain disulfides connect C34–C45, C40–C56, C44–C78, C66–C86, and C80–C104.

Belongs to the colipase family. Forms a 1:1 stoichiometric complex with pancreatic lipase. Expressed by the pancreas.

The protein localises to the secreted. Colipase is a cofactor of pancreatic lipase. It allows the lipase to anchor itself to the lipid-water interface. Without colipase the enzyme is washed off by bile salts, which have an inhibitory effect on the lipase. In terms of biological role, enterostatin has a biological activity as a satiety signal. This is Colipase (CLPS) from Canis lupus familiaris (Dog).